Reading from the N-terminus, the 120-residue chain is Flagellar protein FliT (120 aa).

Residues M1 to I50 are required for homodimerization. A fliD binding region spans residues L60–K98.

It belongs to the FliT family. In terms of assembly, homodimer. Interacts with FliD and FlhC.

It localises to the cytoplasm. It is found in the cytosol. In terms of biological role, dual-function protein that regulates the transcription of class 2 flagellar operons and that also acts as an export chaperone for the filament-capping protein FliD. As a transcriptional regulator, acts as an anti-FlhDC factor; it directly binds FlhC, thus inhibiting the binding of the FlhC/FlhD complex to class 2 promoters, resulting in decreased expression of class 2 flagellar operons. As a chaperone, effects FliD transition to the membrane by preventing its premature polymerization, and by directing it to the export apparatus. This is Flagellar protein FliT from Yersinia enterocolitica serotype O:8 / biotype 1B (strain NCTC 13174 / 8081).